The following is a 458-amino-acid chain: Ig mu chain C region secreted form (458 aa).

Positions 1-106 (VSLSSPTLYP…SNRDLRVSFP (106 aa)) are CH1. Cysteines 28 and 90 form a disulfide. 2 N-linked (GlcNAc...) asparagine glycosylation sites follow: Asn-46 and Asn-114. Residues 107–222 (VDSELPPNVS…VSMSSECSTT (116 aa)) form a CH2 region. A disulfide bridge connects residues Cys-137 and Cys-200. N-linked (GlcNAc...) asparagine glycosylation is found at Asn-212, Asn-261, Asn-277, and Asn-284. A CH3 region spans residues 223-327 (PSPGIQVFPI…PLKHTISKSR (105 aa)). Intrachain disulfides connect Cys-249-Cys-308 and Cys-356-Cys-418. The interval 328-458 (EVAKHPPAVY…IMSDTASTCY (131 aa)) is CH4. Residue Asn-445 is glycosylated (N-linked (GlcNAc...) asparagine).

The protein resides in the secreted. The protein is Ig mu chain C region secreted form of Oryctolagus cuniculus (Rabbit).